The following is a 141-amino-acid chain: Large ribosomal subunit protein uL11 (141 aa).

Belongs to the universal ribosomal protein uL11 family. In terms of assembly, part of the ribosomal stalk of the 50S ribosomal subunit. Interacts with L10 and the large rRNA to form the base of the stalk. L10 forms an elongated spine to which L12 dimers bind in a sequential fashion forming a multimeric L10(L12)X complex. One or more lysine residues are methylated.

Functionally, forms part of the ribosomal stalk which helps the ribosome interact with GTP-bound translation factors. The polypeptide is Large ribosomal subunit protein uL11 (Wolinella succinogenes (strain ATCC 29543 / DSM 1740 / CCUG 13145 / JCM 31913 / LMG 7466 / NCTC 11488 / FDC 602W) (Vibrio succinogenes)).